The sequence spans 381 residues: Flap endonuclease 1 (381 aa).

An N-domain region spans residues Met-1–Arg-105. Asp-34 is a binding site for Mg(2+). Residues Arg-47 and Arg-71 each coordinate DNA. The Mg(2+) site is built by Asp-87, Glu-156, Glu-158, Asp-177, and Asp-179. The tract at residues Glu-120–His-251 is I-domain. Glu-156 provides a ligand contact to DNA. DNA is bound by residues Gly-229 and Asp-231. A Mg(2+)-binding site is contributed by Asp-231. The interval Val-339 to Phe-347 is interaction with PCNA. The segment at Ala-360–Arg-381 is disordered. Positions Lys-365–Arg-381 are enriched in basic residues.

The protein belongs to the XPG/RAD2 endonuclease family. FEN1 subfamily. As to quaternary structure, interacts with PCNA. Three molecules of FEN1 bind to one PCNA trimer with each molecule binding to one PCNA monomer. PCNA stimulates the nuclease activity without altering cleavage specificity. Requires Mg(2+) as cofactor. Phosphorylated. Phosphorylation upon DNA damage induces relocalization to the nuclear plasma.

It localises to the nucleus. The protein localises to the nucleolus. Its subcellular location is the nucleoplasm. The protein resides in the mitochondrion. Structure-specific nuclease with 5'-flap endonuclease and 5'-3' exonuclease activities involved in DNA replication and repair. During DNA replication, cleaves the 5'-overhanging flap structure that is generated by displacement synthesis when DNA polymerase encounters the 5'-end of a downstream Okazaki fragment. It enters the flap from the 5'-end and then tracks to cleave the flap base, leaving a nick for ligation. Also involved in the long patch base excision repair (LP-BER) pathway, by cleaving within the apurinic/apyrimidinic (AP) site-terminated flap. Acts as a genome stabilization factor that prevents flaps from equilibrating into structures that lead to duplications and deletions. Also possesses 5'-3' exonuclease activity on nicked or gapped double-stranded DNA, and exhibits RNase H activity. Also involved in replication and repair of rDNA and in repairing mitochondrial DNA. This is Flap endonuclease 1 from Kluyveromyces lactis (strain ATCC 8585 / CBS 2359 / DSM 70799 / NBRC 1267 / NRRL Y-1140 / WM37) (Yeast).